The chain runs to 525 residues: MAARKAKHAFRSQATQSDAERQDLDSKLAAVLESRGNANAVFDILEHLESKKEDVVQAAIRTTSKLFEVLLEKRELYIGDLPAEDDSPPDTCSAEDKYKMWMRNRYNSCVSCLLDLLQYSSFSVQELVLCTLMKFIQLEGKFPLENSEWRDSYRFPRELLKFVVDNLLQEEADCTLLITRFQEYLEYDDVRYYTMTVTTECVSRIQQKNKQVLPPVFQTNVFCLLSSINMPVEESTLGNFLVTKNENHEEWKPSKLKEQKRVFERVWMSFLKHQLSVSLYKKVLLILHESILPHMSKPSLMIDFLTAAYDVGGAISLLALNGLFILIHQHNLEYPDFYKKLYSLLEPSVFHVKYRARFFHLANLFLSSTHLPVYLVAAFAKRLARLALTAPPQVLLMIIPFICNLIRRHPACRVLIHRPSAGDLVTDPYIMEEQDPAKSQALESCLWELEVLQQHYHGDVVRAANVISRALSAQESDVSGLLEMSSCELFDKEMKKKFKSVPLEYEPVRGLLGLKSDITAEHFTF.

Over residues 1 to 10 (MAARKAKHAF) the composition is skewed to basic residues. The segment at 1–21 (MAARKAKHAFRSQATQSDAER) is disordered. Transmembrane regions (helical) follow at residues 307–327 (AAYD…FILI), 358–378 (FFHL…LVAA), and 386–406 (LALT…CNLI).

The protein belongs to the CBF/MAK21 family.

The protein localises to the nucleus membrane. The protein resides in the nucleus. Its subcellular location is the nucleolus. The polypeptide is Nucleolar complex protein 4 homolog B (noc4l-b) (Xenopus laevis (African clawed frog)).